A 169-amino-acid polypeptide reads, in one-letter code: Ribosome maturation factor RimM (169 aa).

One can recognise a PRC barrel domain in the interval 96-169 (DGEYYWADLI…RILVDWGLDY (74 aa)).

Belongs to the RimM family. As to quaternary structure, binds ribosomal protein uS19.

The protein resides in the cytoplasm. Its function is as follows. An accessory protein needed during the final step in the assembly of 30S ribosomal subunit, possibly for assembly of the head region. Essential for efficient processing of 16S rRNA. May be needed both before and after RbfA during the maturation of 16S rRNA. It has affinity for free ribosomal 30S subunits but not for 70S ribosomes. The sequence is that of Ribosome maturation factor RimM from Chromobacterium violaceum (strain ATCC 12472 / DSM 30191 / JCM 1249 / CCUG 213 / NBRC 12614 / NCIMB 9131 / NCTC 9757 / MK).